The sequence spans 492 residues: MPKKAGKKAGGKLAGLTEEERLLYMQQKAQAEEEIAKRKEDMLTHFLKDKLQKEEKNTVLNLHKLRQQWRAVLTQTKIAELRNDMSVLSQTFERVLDYKDNIIRSLQVDLSERELQSELKRSSHLHNVDCLLEIHKSRLAQLEFNFKSSLVELSSEYNTEREQILSQHQQECVDLDNVMFSMEKHYSDLDGEAKRDYQSTRNQIKKRNFDDKQAVKEQMDGVVEKLWQDQQQVLNHYNESTRDKIITTDDLMNKDVQSAKEIDSLKKHIQKLQDSISTFRGQLSSGQTDKTAEQLRSERDELAQEVQHFRVQLNAAQAIRKKHITKLTVQSNDATKKLQEIVARGERLLRQCEMCCKLETEHEKVLPFYKSSLSEEEQKQEKAKAMESSNEKLTQLMHDYSPLAKFWQRYNKVELDCLCVKREKLLLLQENERLRLFLKQYLDEVSVSDESFRQQKLLVVSSPALQDTAATDRHQQKRHVVQEAACIVQKQL.

Coiled-coil stretches lie at residues leucine 16–valine 95, valine 256–alanine 318, and leucine 373–serine 401.

The protein belongs to the DRC2 family. In terms of assembly, component of the nexin-dynein regulatory complex (N-DRC).

The protein localises to the cytoplasm. It localises to the cytoskeleton. Its subcellular location is the flagellum basal body. The protein resides in the cell projection. It is found in the cilium. The protein localises to the flagellum. It localises to the flagellum axoneme. Its function is as follows. Component of the nexin-dynein regulatory complex (N-DRC), a key regulator of ciliary/flagellar motility which maintains the alignment and integrity of the distal axoneme and regulates microtubule sliding in motile axonemes. Plays a critical role in the assembly of N-DRC and also stabilizes the assembly of multiple inner dynein arms and radial spokes. Coassembles with DRC1 to form a central scaffold needed for assembly of the N-DRC and its attachment to the outer doublet microtubules. This Danio rerio (Zebrafish) protein is Dynein regulatory complex subunit 2 (ccdc65).